The chain runs to 148 residues: uncharacterized protein (148 aa).

Helical transmembrane passes span 29–49, 61–81, 99–119, and 121–141; these read FSLV…AAKE, PIIL…PLVM, FIVF…NGFL, and ILVS…TLCI.

It is found in the cell membrane. This is an uncharacterized protein from Bacillus subtilis (strain 168).